The following is a 526-amino-acid chain: Choline/ethanolamine transporter FLVCR2 (526 aa).

Positions 1 to 70 (MVNEGPNQEE…PSGLAHPSSS (70 aa)) are disordered. Residues 1–76 (MVNEGPNQEE…PSSSGPEDLS (76 aa)) are Cytoplasmic-facing. Residue 1 to 84 (MVNEGPNQEE…LSVIKVSRRR (84 aa)) coordinates heme b. 5 tandem repeats follow at residues 25–30 (PSVSVH), 31–36 (PSVSVH), 37–42 (PSVSIN), 43–48 (PSVSVH), and 49–54 (PSSSAH). Positions 25–56 (PSVSVHPSVSVHPSVSINPSVSVHPSSSAHPS) are enriched in low complexity. An 8 X 6 AA tandem repeats of P-S-[VS]-S-[VIAG]-[HNP] region spans residues 25-72 (PSVSVHPSVSVHPSVSINPSVSVHPSSSAHPSALAQPSGLAHPSSSGP). A 6; approximate repeat occupies 55–60 (PSALAQ). Residues 61–66 (PSGLAH) form a 7; approximate repeat. Residues 67 to 72 (PSSSGP) form repeat 8. A helical membrane pass occupies residues 77–101 (VIKVSRRRWAVVLVFSCYSMCNSFQ). Choline contacts are provided by Asn-98 and Trp-102. Over 102-119 (WIQYGSINNIFMHFYGVS) the chain is Extracellular. The chain crosses the membrane as a helical span at residues 120–147 (AFAIDWLSMCYMLTYIPLLLPVAWLLEK). At 148–149 (FG) the chain is on the cytoplasmic side. A helical transmembrane segment spans residues 150–169 (LRTIALTGSALNCLGAWVKL). At 170–176 (GSLKPHL) the chain is on the extracellular side. The chain crosses the membrane as a helical span at residues 177-205 (FPVTVVGQLICSVAQVFILGMPSRIASVW). 2 residues coordinate choline: Gln-191 and Leu-195. The Cytoplasmic segment spans residues 206 to 210 (FGANE). Residues 211–236 (VSTACSVAVFGNQLGIAIGFLVPPVL) traverse the membrane as a helical segment. The Extracellular portion of the chain corresponds to 237 to 241 (VPNIE). Residues 242–271 (DRDELAYHISIMFYIIGGVATLLLILVIIV) form a helical membrane-spanning segment. The Cytoplasmic portion of the chain corresponds to 272–307 (FKEKPKYPPSRAQSLSYALTSPDASYLGSIARLFKN). Residues 308–338 (LNFVLLVITYGLNAGAFYALSTLLNRMVIWH) form a helical membrane-spanning segment. Tyr-325 contributes to the choline binding site. Topologically, residues 339 to 342 (YPGE) are extracellular. Residues 343–371 (EVNAGRIGLTIVIAGMLGAVISGIWLDRS) traverse the membrane as a helical segment. Topologically, residues 372 to 373 (KT) are cytoplasmic. Residues 374-396 (YKETTLVVYIMTLVGMVVYTFTL) form a helical membrane-spanning segment. The Extracellular portion of the chain corresponds to 397–399 (NLG). The chain crosses the membrane as a helical span at residues 400 to 429 (HLWVVFITAGTMGFFMTGYLPLGFEFAVEL). Topologically, residues 430 to 437 (TYPESEGI) are cytoplasmic. A helical membrane pass occupies residues 438 to 463 (SSGLLNISAQVFGIIFTISQGQIIDN). Gln-447 serves as a coordination point for choline. Residues 464–465 (YG) are Extracellular-facing. Residues 466–488 (TKPGNIFLCVFLTLGAALTAFIK) form a helical membrane-spanning segment. Topologically, residues 489-526 (ADLRRQKANKETLENKLQEEEEESNTSKVPTAVSEDHL) are cytoplasmic. Positions 500 to 526 (TLENKLQEEEEESNTSKVPTAVSEDHL) are disordered. Ser-515 is subject to Phosphoserine.

The protein belongs to the major facilitator superfamily. Feline leukemia virus subgroup C receptor (TC 2.A.1.28.1) family. Interacts with components of electron transfer chain complexes III, IV and V including CYC1, NDUFA4, COX4I1, ATP5PD and ATP5F1C; these interactions occur in the absence of heme and are disrupted upon heme binding. Interacts with ATP2A2; this interaction occurs in the absence of heme and promotes ATP2A2 proteasomal degradation; the complex is dissociated upon heme binding. Interacts with HMOX1; this interaction is potentiated in the presence of heme. Expressed in non-hematopoietic tissues, with relative abundant expression in brain, placenta, lung, liver and kidney. Also expressed in hematopoietic tissues (fetal liver, spleen, lymph node, thymus, leukocytes and bone marrow). Found in acidophil cells of the pituitary that secrete growth hormone and prolactin (at protein level).

Its subcellular location is the cell membrane. The protein localises to the mitochondrion membrane. It localises to the endoplasmic reticulum membrane. The catalysed reaction is choline(out) = choline(in). The enzyme catalyses ethanolamine(in) = ethanolamine(out). It carries out the reaction heme b(in) = heme b(out). In terms of biological role, choline uniporter that specifically mediates choline uptake at the blood-brain-barrier. Responsible for the majority of choline uptake across the blood-brain-barrier from the circulation into the brain. Choline, a nutrient critical for brain development, is a precursor of phosphatidylcholine, as well as betaine. Also mediates transport of ethanolamine. Choline and ethanolamine transport is not coupled with proton transport and is exclusively driven by the choline gradient across the plasma membrane. However, the presence of an inwardly directed proton gradient enhances choline uptake. Also acts as a heme b transporter. Required to regulate mitochondrial respiration processes, ATP synthesis and thermogenesis. At low heme levels, interacts with components of electron transfer chain (ETC) complexes and ATP2A2, leading to ubiquitin-mediated degradation of ATP2A2 and inhibition of thermogenesis. Upon heme binding, dissociates from ETC complexes to allow switching from mitochondrial ATP synthesis to thermogenesis. The sequence is that of Choline/ethanolamine transporter FLVCR2 from Homo sapiens (Human).